Consider the following 108-residue polypeptide: Thiosulfate sulfurtransferase GlpE (108 aa).

The 89-residue stretch at 18 to 106 (QNEDAVLVDI…WVRSELPIEL (89 aa)) folds into the Rhodanese domain. The active-site Cysteine persulfide intermediate is the Cys66.

This sequence belongs to the GlpE family.

It is found in the cytoplasm. The catalysed reaction is thiosulfate + hydrogen cyanide = thiocyanate + sulfite + 2 H(+). The enzyme catalyses thiosulfate + [thioredoxin]-dithiol = [thioredoxin]-disulfide + hydrogen sulfide + sulfite + 2 H(+). In terms of biological role, transferase that catalyzes the transfer of sulfur from thiosulfate to thiophilic acceptors such as cyanide or dithiols. May function in a CysM-independent thiosulfate assimilation pathway by catalyzing the conversion of thiosulfate to sulfite, which can then be used for L-cysteine biosynthesis. The protein is Thiosulfate sulfurtransferase GlpE of Glaesserella parasuis serovar 5 (strain SH0165) (Haemophilus parasuis).